The sequence spans 142 residues: Large ribosomal subunit protein uL13 (142 aa).

The protein belongs to the universal ribosomal protein uL13 family. In terms of assembly, part of the 50S ribosomal subunit.

Its function is as follows. This protein is one of the early assembly proteins of the 50S ribosomal subunit, although it is not seen to bind rRNA by itself. It is important during the early stages of 50S assembly. In Histophilus somni (strain 2336) (Haemophilus somnus), this protein is Large ribosomal subunit protein uL13.